We begin with the raw amino-acid sequence, 290 residues long: Probable transcriptional regulatory protein HAH1 (290 aa).

This sequence belongs to the TACO1 family.

It localises to the mitochondrion. The protein is Probable transcriptional regulatory protein HAH1 of Saccharomyces cerevisiae (strain ATCC 204508 / S288c) (Baker's yeast).